A 109-amino-acid polypeptide reads, in one-letter code: Large ribosomal subunit protein uL24 (109 aa).

Belongs to the universal ribosomal protein uL24 family. In terms of assembly, part of the 50S ribosomal subunit.

Functionally, one of two assembly initiator proteins, it binds directly to the 5'-end of the 23S rRNA, where it nucleates assembly of the 50S subunit. In terms of biological role, one of the proteins that surrounds the polypeptide exit tunnel on the outside of the subunit. The sequence is that of Large ribosomal subunit protein uL24 from Legionella pneumophila subsp. pneumophila (strain Philadelphia 1 / ATCC 33152 / DSM 7513).